A 328-amino-acid chain; its full sequence is Probable fused nickel transport protein LarMN (328 aa).

8 helical membrane passes run 8-28 (LSPATCGTLVTAMAPVWTVAV), 42-62 (LPMLGIAASLAFLIMMFNLPI), 75-95 (LLAVLIGPWAACLALTVTLLL), 103-123 (GGILAFGANALNMAVIMPFVG), 138-158 (LGLAIGAYLGINMAALVAGIE), 187-207 (MLTAHLLVAGWVEVVFTLLVF), 229-249 (PWIALLLGLAVLSPLGLLASN), and 296-316 (PVSVGYILSAITAVLIFLLLI).

This sequence belongs to the CbiM family. NikM subfamily. In terms of assembly, may form an energy-coupling factor (ECF) transporter complex composed of an ATP-binding protein (A component, LarO), a transmembrane protein (T component, LarQ) and a fused possible substrate-capture protein (S component, LarMN) of unknown stoichiometry.

It localises to the cell membrane. Functionally, probably part of the energy-coupling factor (ECF) transporter complex LarMNQO involved in nickel import. The sequence is that of Probable fused nickel transport protein LarMN from Lactiplantibacillus plantarum (strain ATCC BAA-793 / NCIMB 8826 / WCFS1) (Lactobacillus plantarum).